The primary structure comprises 488 residues: Microtubule-destabilizing protein 60 (488 aa).

Residues 25–56 (AQEVSRFSENSNPNFVSHSTPLEKSSKSSAQK) are compositionally biased toward polar residues. 3 disordered regions span residues 25-71 (AQEV…VFSP), 262-304 (HASV…TKKQ), and 436-457 (DRPF…PKFN). Over residues 264–280 (SVSSSWDNSVSSLNSNG) the composition is skewed to low complexity.

The protein belongs to the TPX2 family.

Its subcellular location is the cytoplasm. It is found in the cytoskeleton. Functionally, binds directly to microtubules. Microtubule-destabilizing protein involved in the PIF3-dependent positive regulation of hypocotyl cell elongation via the modulation of cortical microtubules dynamic in response to light and ethylene signaling. Promotes submergence-induced and ethylene-dependent underwater hypocotyl elongation. This is Microtubule-destabilizing protein 60 from Arabidopsis thaliana (Mouse-ear cress).